A 108-amino-acid polypeptide reads, in one-letter code: uncharacterized protein (108 aa).

This is an uncharacterized protein from Pasteurella multocida (strain Pm70).